A 955-amino-acid polypeptide reads, in one-letter code: MIMNQEYIKVRGAKEHNLKNINVDIPRNKFVVITGLSGSGKSSLAFDTIYAEGQRRYVESLSSYARQFLHLQNKPNVESISGLSPAIAIDQKTTSKNPRSTVGTITEIYDYLRLLYARVGIPYSPATGLPIHSQTVSEMVDIINELPKGTKVYLLAPIVRGHKGEFKREIMNLKKQGFQKLIVNGEVCEIDDLPKLDKNKKHNIEVIVDRIVLDESLGNRLADSLESSLNLAEGITYLEIVELPPAVKTEFEKNQRITFSEKYSCPVSGFQLTEIEPRIFSFNSPFGACPKCEGIGKEFFFDRELIVPDQRISIKDGAIVPWGSTSSKFILETLKALADHYKFSIEVPFASLSQNVKDILFEGSGEEAIKFEFHDGSKTQIIKQPFAGIIPSLQEKDRTIESVLIKEELAKFKSEHKCTACSGFRLKDEALCVKIANFHIGEVAGMSIAALQKWFSHLEEKLNKKQLFIAERILKEITERLKFLMNVGLDYLTLSREAGTLSGGESQRIRLASQIGSGLSGVLYVLDEPSIGLHQRDNTRLIETLKRLRDLGNTVLVVEHDEETMYEADHIIDIGPGAGIHGGRVIAEGNAEEIKNFEESITGRYLSGRQTIKVPSETRVGHDNRSIELLGAVSNNLDNVDIKIPLGTFTAITGVSGSGKSSLMIHTLYKAALKHLETTSKVFPGKYRELKGLEYIDKIIDINQSPIGRTPRSNPATYTGAFTHIRDWFVELPESKARGYKVGRFSFNVKGGRCEACQGDGLIKIEMHFLPDVYVKCDICNGHRYNRETLEIKYKGKSIADILMMTVEDAMQFFEKIPLIYEKLITLNEVGLGYIKIGQSATTLSGGEAQRVKLAKELSRRSTGKTLYILDEPTTGLHIDDINKLLKVLHKLVDMGNTVLVIEHNLDVIKTADYIIDVGPEGGDKGGKIVVCGTPADIAACAESHTGRYLKQYLE.

35 to 42 (GLSGSGKS) provides a ligand contact to ATP. ABC transporter domains are found at residues 322–601 (WGST…EESI) and 621–951 (GHDN…RYLK). An ATP-binding site is contributed by 654–661 (GVSGSGKS). Residues 754 to 780 (CEACQGDGLIKIEMHFLPDVYVKCDIC) form a C4-type zinc finger.

The protein belongs to the ABC transporter superfamily. UvrA family. Forms a heterotetramer with UvrB during the search for lesions.

It is found in the cytoplasm. In terms of biological role, the UvrABC repair system catalyzes the recognition and processing of DNA lesions. UvrA is an ATPase and a DNA-binding protein. A damage recognition complex composed of 2 UvrA and 2 UvrB subunits scans DNA for abnormalities. When the presence of a lesion has been verified by UvrB, the UvrA molecules dissociate. This is UvrABC system protein A from Rickettsia felis (strain ATCC VR-1525 / URRWXCal2) (Rickettsia azadi).